The following is a 163-amino-acid chain: uncharacterized protein (163 aa).

Residues 1–33 (MKTLDKITNYDLFDFADEFLKFVPVFRPNPTVT) lie on the Cytoplasmic side of the membrane. The helical transmembrane segment at 34–54 (CLFGNPLTNLLVNGTGAACFF) threads the bilayer. Residues 55–117 (EFCSLALIKV…SLGMALPDDD (63 aa)) lie on the Extracellular side of the membrane. The chain crosses the membrane as a helical span at residues 118–138 (VLLSITFWFLCNSSFSILFVF). The Cytoplasmic segment spans residues 139–163 (ELRIFLRTVNNLLVVFLSVLKRNDL).

It is found in the membrane. This is an uncharacterized protein from Saccharomyces cerevisiae (strain ATCC 204508 / S288c) (Baker's yeast).